The following is a 397-amino-acid chain: MTSLFPHQKAKALKPNSRRPAKELCSECGLCDTYYIHYVKEACAFITQQIDTLEEQAHQRSRNLDNPDELYFGVHQDMIAAKKQQPIAGAQWTGIVSSIAIEMLNHGLVEGVVCVQNSKEDRFQPMPVIARTPEEILAARVNKPTLSPNLSILEQVEKSGMKRLLVIGVGCQIQALRAVEKKLGLEKLYVLGTPCVDNVTRAGLQKFLETTSRSPETVVHYEFMQDFRIHFKHEDGSIEKVPFFGLKTNQLKDVFAPSCMSCFDYVNSLADLVVGYMGAPFGWQWILVRNDTGKEMLDLVQNQLDTQPVMSEGNRQEAVQQGISAYDKGVTLPMWVAKIMGVVIDKIGPKGLEYARFSIDSHFTRNYLFVKRNHPEKLAAHVPEFAKRIVGQYKLPE.

This is an uncharacterized protein from Nostoc sp. (strain PCC 7120 / SAG 25.82 / UTEX 2576).